The following is a 135-amino-acid chain: Probable disulfide formation protein (135 aa).

The chain crosses the membrane as a helical span at residues 7 to 26; the sequence is SYCLYLAWLFSCIGTLMSVY. A disulfide bond links Cys-36 and Cys-39. 2 helical membrane-spanning segments follow: residues 41–60 and 67–84; these read YQRI…AYRE and YTLP…YQVC. A disulfide bridge links Cys-96 with Cys-101. A helical transmembrane segment spans residues 109–131; that stretch reads GFITMPMASAAAFCAIACLLVLA.

The protein belongs to the DsbB family. BdbC subfamily.

The protein localises to the cell inner membrane. Functionally, required for disulfide bond formation in some proteins. This is Probable disulfide formation protein from Chlamydia trachomatis serovar D (strain ATCC VR-885 / DSM 19411 / UW-3/Cx).